Consider the following 401-residue polypeptide: Dihydrolipoyllysine-residue succinyltransferase component of 2-oxoglutarate dehydrogenase complex (401 aa).

Residues 2–77 (SVKIIVPSLG…AVGEEIGEIN (76 aa)) form the Lipoyl-binding domain. Lys43 is subject to N6-lipoyllysine. The Peripheral subunit-binding (PSBD) domain maps to 115–152 (ILAPSVQKLVTENKLDPNNIKGTGRDGRITKGDVLETI). Residues His372 and Asp376 contribute to the active site.

Belongs to the 2-oxoacid dehydrogenase family. In terms of assembly, forms a 24-polypeptide structural core with octahedral symmetry. Part of the 2-oxoglutarate dehydrogenase (OGDH) complex composed of E1 (2-oxoglutarate dehydrogenase), E2 (dihydrolipoamide succinyltransferase) and E3 (dihydrolipoamide dehydrogenase); the complex contains multiple copies of the three enzymatic components (E1, E2 and E3). The cofactor is (R)-lipoate.

The enzyme catalyses N(6)-[(R)-dihydrolipoyl]-L-lysyl-[protein] + succinyl-CoA = N(6)-[(R)-S(8)-succinyldihydrolipoyl]-L-lysyl-[protein] + CoA. It participates in amino-acid degradation; L-lysine degradation via saccharopine pathway; glutaryl-CoA from L-lysine: step 6/6. Its function is as follows. E2 component of the 2-oxoglutarate dehydrogenase (OGDH) complex which catalyzes the second step in the conversion of 2-oxoglutarate to succinyl-CoA and CO(2). This chain is Dihydrolipoyllysine-residue succinyltransferase component of 2-oxoglutarate dehydrogenase complex (sucB), found in Rickettsia felis (strain ATCC VR-1525 / URRWXCal2) (Rickettsia azadi).